The sequence spans 129 residues: Phenazine antibiotic resistance protein EhpR (129 aa).

A VOC domain is found at 10 to 128 (TPNLQLVYVS…DGHIIRVCPL (119 aa)). D-alanylgriseoluteate is bound by residues 42–43 (RY) and W57.

As to quaternary structure, homodimer.

Functionally, required for resistance to the phenazine antibiotic D-alanylgriseoluteic acid (AGA), an antibiotic produced by E.agglomerans itself, and thus protects the bacterium against phenazine toxicity. Probably binds AGA and acts as a chaperone that works in tandem with a membrane transporter for subsequent antibiotic secretion. This Enterobacter agglomerans (Erwinia herbicola) protein is Phenazine antibiotic resistance protein EhpR.